Reading from the N-terminus, the 411-residue chain is Tyrosine--tRNA ligase (411 aa).

Y34 contacts L-tyrosine. The 'HIGH' region signature appears at 39–48 (CTATSLHIGS). Positions 171 and 175 each coordinate L-tyrosine. The 'KMSKS' region signature appears at 231–235 (KMGKT). ATP is bound at residue K234. Residues 345–411 (ISAYELFHEA…GKKRHILVRV (67 aa)) enclose the S4 RNA-binding domain.

This sequence belongs to the class-I aminoacyl-tRNA synthetase family. TyrS type 1 subfamily. Homodimer.

It is found in the cytoplasm. It catalyses the reaction tRNA(Tyr) + L-tyrosine + ATP = L-tyrosyl-tRNA(Tyr) + AMP + diphosphate + H(+). Its function is as follows. Catalyzes the attachment of tyrosine to tRNA(Tyr) in a two-step reaction: tyrosine is first activated by ATP to form Tyr-AMP and then transferred to the acceptor end of tRNA(Tyr). This is Tyrosine--tRNA ligase from Rickettsia felis (strain ATCC VR-1525 / URRWXCal2) (Rickettsia azadi).